A 220-amino-acid polypeptide reads, in one-letter code: MKAVCVISGGMDSSTAAFIAKEQGYEILALHFDYNQRTMKKERECFNLICDDLGVKSREILDVSFIAQIGANSLTDKNLTIQKTGVKSGEIPNTYVPFRNGIFLSVAAAFAEKEGADALFIGVVEEDSSGYPDCSENFIKKIESAINAGTSPNFKLEIKIPLVHLSKTQIVKKALEIGVPLEHTWSCYEREDKACGFCDSCRLRLKGFKGADTKDTIPYI.

7 to 17 (ISGGMDSSTAA) contributes to the ATP binding site. Cys-187, Cys-195, Cys-198, and Cys-201 together coordinate Zn(2+).

This sequence belongs to the QueC family. Zn(2+) serves as cofactor.

It catalyses the reaction 7-carboxy-7-deazaguanine + NH4(+) + ATP = 7-cyano-7-deazaguanine + ADP + phosphate + H2O + H(+). The protein operates within purine metabolism; 7-cyano-7-deazaguanine biosynthesis. Functionally, catalyzes the ATP-dependent conversion of 7-carboxy-7-deazaguanine (CDG) to 7-cyano-7-deazaguanine (preQ(0)). The polypeptide is 7-cyano-7-deazaguanine synthase (Campylobacter hominis (strain ATCC BAA-381 / DSM 21671 / CCUG 45161 / LMG 19568 / NCTC 13146 / CH001A)).